We begin with the raw amino-acid sequence, 231 residues long: Large ribosomal subunit protein uL1 (231 aa).

This sequence belongs to the universal ribosomal protein uL1 family. Part of the 50S ribosomal subunit.

Binds directly to 23S rRNA. The L1 stalk is quite mobile in the ribosome, and is involved in E site tRNA release. Functionally, protein L1 is also a translational repressor protein, it controls the translation of the L11 operon by binding to its mRNA. This chain is Large ribosomal subunit protein uL1, found in Acinetobacter baylyi (strain ATCC 33305 / BD413 / ADP1).